Reading from the N-terminus, the 407-residue chain is Putative cell wall shaping protein YabE (407 aa).

The first 31 residues, 1 to 31, serve as a signal peptide directing secretion; the sequence is MKKLFSVKLSKSKVILVAACLLLAGSGTAYA. Positions 206–286 constitute a G5 domain; it reads ITRIEKVTDV…DKVIAVGTKQ (81 aa).

Functionally, suggested to be involved in cell wall modification. The polypeptide is Putative cell wall shaping protein YabE (yabE) (Bacillus subtilis (strain 168)).